The primary structure comprises 517 residues: 3-hydroxyphenylacetate 6-hydroxylase (517 aa).

Cysteine 449 provides a ligand contact to heme.

The protein belongs to the cytochrome P450 family.

The enzyme catalyses 3-hydroxyphenylacetate + NADH + O2 + H(+) = homogentisate + NAD(+) + H2O. It catalyses the reaction 3-hydroxyphenylacetate + NADPH + O2 + H(+) = homogentisate + NADP(+) + H2O. The catalysed reaction is 3,4-dihydroxyphenylacetate + NADH + O2 + H(+) = 2,4,5-trihydroxyphenylacetate + NAD(+) + H2O. It carries out the reaction 3,4-dihydroxyphenylacetate + NADPH + O2 + H(+) = 2,4,5-trihydroxyphenylacetate + NADP(+) + H2O. It functions in the pathway aromatic compound metabolism; phenylacetate degradation. Catalyzes the hydroxylation of 3-hydroxyphenylacetate and 3,4-dihydroxyphenylacetate to 2,5-dihydroxyphenylacetate (homogentisate) and 2,4,5-trihydroxyphenylacetate, respectively. Both of these compounds are used as substrate by homogentisate dioxygenase in the homogentisate pathway. The homogentisate pathway is used to catabolize phenylacetate and use it as a carbon source. Can also catalyze the hydroxylation of phenylacetate to 2-hydroxyphenylacetate at low efficiency to compensate for loss of phacA. In Emericella nidulans (Aspergillus nidulans), this protein is 3-hydroxyphenylacetate 6-hydroxylase (phacB).